The chain runs to 131 residues: Small ribosomal subunit protein uS8 (131 aa).

Belongs to the universal ribosomal protein uS8 family. In terms of assembly, part of the 30S ribosomal subunit. Contacts proteins S5 and S12.

Its function is as follows. One of the primary rRNA binding proteins, it binds directly to 16S rRNA central domain where it helps coordinate assembly of the platform of the 30S subunit. This chain is Small ribosomal subunit protein uS8, found in Novosphingobium aromaticivorans (strain ATCC 700278 / DSM 12444 / CCUG 56034 / CIP 105152 / NBRC 16084 / F199).